Consider the following 409-residue polypeptide: Tyrosine--tRNA ligase (409 aa).

The 'HIGH' region signature appears at P54–H63. The short motif at K238–S242 is the 'KMSKS' region element. ATP is bound at residue K241. The region spanning Q347–L407 is the S4 RNA-binding domain.

This sequence belongs to the class-I aminoacyl-tRNA synthetase family. TyrS type 2 subfamily. In terms of assembly, homodimer.

The protein localises to the cytoplasm. It carries out the reaction tRNA(Tyr) + L-tyrosine + ATP = L-tyrosyl-tRNA(Tyr) + AMP + diphosphate + H(+). Functionally, catalyzes the attachment of tyrosine to tRNA(Tyr) in a two-step reaction: tyrosine is first activated by ATP to form Tyr-AMP and then transferred to the acceptor end of tRNA(Tyr). This chain is Tyrosine--tRNA ligase, found in Bordetella bronchiseptica (strain ATCC BAA-588 / NCTC 13252 / RB50) (Alcaligenes bronchisepticus).